Here is a 1094-residue protein sequence, read N- to C-terminus: Protein phosphatase 2C and cyclic nucleotide-binding/kinase domain-containing protein (1094 aa).

Residues 107–397 (RCSFLSQRGY…DDITIIVVHI (291 aa)) form the PPM-type phosphatase domain. Mn(2+) is bound by residues Asp148, Gly149, Asp344, and Asp388. A nucleoside 3',5'-cyclic phosphate is bound by residues 491 to 616 (LFRK…RSVD) and 617 to 758 (LLSR…RHSS). In terms of domain architecture, Protein kinase spans 785-1038 (TTCLSTTDCS…PESIKKHPWF (254 aa)). Residues 791-799 (TDCSEIGLV) and Lys811 each bind ATP.

In the N-terminal section; belongs to the PP2C family. This sequence in the C-terminal section; belongs to the protein kinase superfamily. AGC Ser/Thr protein kinase family. Requires Mg(2+) as cofactor. It depends on Mn(2+) as a cofactor.

It catalyses the reaction O-phospho-L-seryl-[protein] + H2O = L-seryl-[protein] + phosphate. The enzyme catalyses O-phospho-L-threonyl-[protein] + H2O = L-threonyl-[protein] + phosphate. This Arabidopsis thaliana (Mouse-ear cress) protein is Protein phosphatase 2C and cyclic nucleotide-binding/kinase domain-containing protein.